The following is a 913-amino-acid chain: Protein SEY1 homolog (913 aa).

Residues 1 to 825 lie on the Cytoplasmic side of the membrane; the sequence is MANASKTQII…ETGGQMSLKN (825 aa). The GB1/RHD3-type G domain occupies 33 to 288; it reads GFNYNVIAIL…IPADGFAQYC (256 aa). GTP is bound at residue 43 to 50; sequence GSQSSGKS. Disordered stretches follow at residues 89–108 and 436–455; these read AGGSSEGTDAESKNKSGDKP and TEQDDNLSNMDKSGESAKKG. Coiled-coil stretches lie at residues 636-659 and 703-727; these read DDENNNFDEIDTEIDQSKNDMESL and IEIIIDALKIKLDEISNDIANVIIN. The chain crosses the membrane as a helical span at residues 826–846; that stretch reads VPFAFWVILLILGWNEILMFT. Residues 847-849 lie on the Lumenal side of the membrane; that stretch reads RLF. The chain crosses the membrane as a helical span at residues 850–870; the sequence is FRLNIILPMFMAFIIIVGSCL. Topologically, residues 871–913 are cytoplasmic; the sequence is YTGNAQVLSYLNKIAFIVIKHSYNFYKHLQTVGNQPTKPEKVD.

This sequence belongs to the TRAFAC class dynamin-like GTPase superfamily. GB1/RHD3 GTPase family. RHD3 subfamily.

The protein resides in the endoplasmic reticulum membrane. Its function is as follows. Probable GTP-binding protein involved in generating and maintaining the structure of the tubular endoplasmic reticulum network. This Plasmodium chabaudi chabaudi protein is Protein SEY1 homolog.